A 113-amino-acid polypeptide reads, in one-letter code: Large ribosomal subunit protein bL19 (113 aa).

This sequence belongs to the bacterial ribosomal protein bL19 family.

In terms of biological role, this protein is located at the 30S-50S ribosomal subunit interface and may play a role in the structure and function of the aminoacyl-tRNA binding site. This is Large ribosomal subunit protein bL19 from Mycobacterium marinum (strain ATCC BAA-535 / M).